A 283-amino-acid polypeptide reads, in one-letter code: Thymidylate synthase (283 aa).

Arg22 lines the dUMP pocket. Cys160 serves as the catalytic Nucleophile. DUMP-binding positions include 180–183 (RSCD), Asn191, and 221–223 (HIY). Asp183 lines the (6R)-5,10-methylene-5,6,7,8-tetrahydrofolate pocket. Ser282 contributes to the (6R)-5,10-methylene-5,6,7,8-tetrahydrofolate binding site.

Belongs to the thymidylate synthase family. Bacterial-type ThyA subfamily. Homodimer.

Its subcellular location is the cytoplasm. The enzyme catalyses dUMP + (6R)-5,10-methylene-5,6,7,8-tetrahydrofolate = 7,8-dihydrofolate + dTMP. It participates in pyrimidine metabolism; dTTP biosynthesis. Catalyzes the reductive methylation of 2'-deoxyuridine-5'-monophosphate (dUMP) to 2'-deoxythymidine-5'-monophosphate (dTMP) while utilizing 5,10-methylenetetrahydrofolate (mTHF) as the methyl donor and reductant in the reaction, yielding dihydrofolate (DHF) as a by-product. This enzymatic reaction provides an intracellular de novo source of dTMP, an essential precursor for DNA biosynthesis. The sequence is that of Thymidylate synthase from Pseudoalteromonas translucida (strain TAC 125).